The following is a 425-amino-acid chain: MATAVVVNIGKKLYEGKTKEVYELLDTPGRVLLQSKDQITAGNAARKNHLEGKAAISNKITSCIFQLLQEAGIKTAFTKKCGETAFIAPQCEMIPIEWVCRRIATGSFLKRNPGVQEGYKFYPPKVEMFFKDDANNDPQWSEEQLIAAKFCFAGLVIGQTEVDIMSHATQAIFEILEKSWLPQDCTLVDMKIEFGVDVTTKEIVLADVIDNDSWRLWPSGDRSQQKDKQSYRDLKEVTPEGLQMVKKNFEWVADRVELLLKSDSQCRVVVLMGSTSDLGHCEKIKKACGNFGIPCELRVTSAHKGPDETLRIKAEYEGDGIPTVFVSVAGRSNGLGPVLSGNTAYPVISCPPITPDWGAQDVWSSLRLPSGIGCSTILSPEGSAQFAAQIFGLNNHLVWAKLRASILNTWISLKQADKKVRQCNL.

An N-acetylalanine modification is found at Ala2. The segment at 2–260 (ATAVVVNIGK…WVADRVELLL (259 aa)) is SAICAR synthetase domain. At Tyr22 the chain carries Phosphotyrosine. Lys36 bears the N6-acetyllysine mark. The residue at position 107 (Ser107) is a Phosphoserine. Thr238 is modified (phosphothreonine). An N6-acetyllysine modification is found at Lys247. Positions 261–266 (KSDSQC) are linker. Residues 267-425 (RVVVLMGSTS…ADKKVRQCNL (159 aa)) are AIR carboxylase domain. At Ser274 the chain carries Phosphoserine. A CO2-binding site is contributed by Ser332.

This sequence in the N-terminal section; belongs to the SAICAR synthetase family. In the C-terminal section; belongs to the AIR carboxylase family. Class II subfamily. As to quaternary structure, homooctamer.

It carries out the reaction 5-amino-1-(5-phospho-D-ribosyl)imidazole-4-carboxylate + L-aspartate + ATP = (2S)-2-[5-amino-1-(5-phospho-beta-D-ribosyl)imidazole-4-carboxamido]succinate + ADP + phosphate + 2 H(+). The catalysed reaction is 5-amino-1-(5-phospho-D-ribosyl)imidazole-4-carboxylate + H(+) = 5-amino-1-(5-phospho-beta-D-ribosyl)imidazole + CO2. It functions in the pathway purine metabolism; IMP biosynthesis via de novo pathway; 5-amino-1-(5-phospho-D-ribosyl)imidazole-4-carboxamide from 5-amino-1-(5-phospho-D-ribosyl)imidazole-4-carboxylate: step 1/2. Its pathway is purine metabolism; IMP biosynthesis via de novo pathway; 5-amino-1-(5-phospho-D-ribosyl)imidazole-4-carboxylate from 5-amino-1-(5-phospho-D-ribosyl)imidazole (carboxylase route): step 1/1. Its function is as follows. Bifunctional phosphoribosylaminoimidazole carboxylase and phosphoribosylaminoimidazole succinocarboxamide synthetase catalyzing two reactions of the de novo purine biosynthetic pathway. The protein is Bifunctional phosphoribosylaminoimidazole carboxylase/phosphoribosylaminoimidazole succinocarboxamide synthetase of Mus musculus (Mouse).